The primary structure comprises 96 residues: MEQAPEDQGPQREPHNEWTLELLEEIKNEAVRHFPRVWLHQLGQHIYNTYGDTWVGVEALIRTLQQLLFIHFRIGCQHSRIGITRQRRVRNGPSRS.

A homooligomerization region spans residues 1 to 42; sequence MEQAPEDQGPQREPHNEWTLELLEEIKNEAVRHFPRVWLHQL. 3 positions are modified to phosphoserine; by host: Ser-79, Ser-94, and Ser-96.

It belongs to the HIV-1 VPR protein family. As to quaternary structure, homooligomer, may form homodimer. Interacts with p6-gag region of the Pr55 Gag precursor protein through a (Leu-X-X)4 motif near the C-terminus of the P6gag protein. Interacts with host UNG. May interact with host RAD23A/HHR23A. Interacts with host VPRBP/DCAF1, leading to hijack the CUL4A-RBX1-DDB1-DCAF1/VPRBP complex, mediating ubiquitination of host proteins such as TERT and ZGPAT and arrest of the cell cycle in G2 phase. In terms of processing, phosphorylated on several residues by host. These phosphorylations regulate VPR activity for the nuclear import of the HIV-1 pre-integration complex.

It localises to the virion. The protein resides in the host nucleus. Its subcellular location is the host extracellular space. During virus replication, may deplete host UNG protein, and incude G2-M cell cycle arrest. Acts by targeting specific host proteins for degradation by the 26S proteasome, through association with the cellular CUL4A-DDB1 E3 ligase complex by direct interaction with host VPRPB/DCAF-1. Cell cycle arrest reportedly occurs within hours of infection and is not blocked by antiviral agents, suggesting that it is initiated by the VPR carried into the virion. Additionally, VPR induces apoptosis in a cell cycle dependent manner suggesting that these two effects are mechanistically linked. Detected in the serum and cerebrospinal fluid of AIDS patient, VPR may also induce cell death to bystander cells. Functionally, during virus entry, plays a role in the transport of the viral pre-integration (PIC) complex to the host nucleus. This function is crucial for viral infection of non-dividing macrophages. May act directly at the nuclear pore complex, by binding nucleoporins phenylalanine-glycine (FG)-repeat regions. The sequence is that of Protein Vpr from Homo sapiens (Human).